The chain runs to 665 residues: DNA ligase (665 aa).

Residues Asp-31–Asp-35, Ser-80–Leu-81, and Glu-110 each bind NAD(+). Lys-112 (N6-AMP-lysine intermediate) is an active-site residue. NAD(+) contacts are provided by Arg-133, Glu-170, Lys-285, and Lys-309. Zn(2+) contacts are provided by Cys-403, Cys-406, Cys-421, and Cys-427. In terms of domain architecture, BRCT spans Gly-587–Ser-665.

It belongs to the NAD-dependent DNA ligase family. LigA subfamily. The cofactor is Mg(2+). Mn(2+) is required as a cofactor.

The enzyme catalyses NAD(+) + (deoxyribonucleotide)n-3'-hydroxyl + 5'-phospho-(deoxyribonucleotide)m = (deoxyribonucleotide)n+m + AMP + beta-nicotinamide D-nucleotide.. Functionally, DNA ligase that catalyzes the formation of phosphodiester linkages between 5'-phosphoryl and 3'-hydroxyl groups in double-stranded DNA using NAD as a coenzyme and as the energy source for the reaction. It is essential for DNA replication and repair of damaged DNA. The polypeptide is DNA ligase (Bacteroides fragilis (strain ATCC 25285 / DSM 2151 / CCUG 4856 / JCM 11019 / LMG 10263 / NCTC 9343 / Onslow / VPI 2553 / EN-2)).